Here is a 197-residue protein sequence, read N- to C-terminus: uncharacterized protein (197 aa).

A helical transmembrane segment spans residues 150-172; sequence SLKLNTTLPMFALNLICLLRSIL.

The protein localises to the membrane. This is an uncharacterized protein from Saccharomyces cerevisiae (strain ATCC 204508 / S288c) (Baker's yeast).